Here is a 243-residue protein sequence, read N- to C-terminus: Venom nerve growth factor (243 aa).

Positions 1 to 18 (MSMLCYTLIIAFLIGIWA) are cleaved as a signal peptide. A propeptide spanning residues 19–125 (APKSEDNVPL…TLNRNIWANN (107 aa)) is cleaved from the precursor. The span at 47-66 (GLKTSRNTDQHHPTPKKSED) shows a compositional bias: basic and acidic residues. Residues 47–70 (GLKTSRNTDQHHPTPKKSEDQELG) are disordered. Disulfide bonds link Cys139/Cys204, Cys182/Cys232, and Cys192/Cys234. Asn148 carries an N-linked (GlcNAc...) asparagine glycan.

Belongs to the NGF-beta family. In terms of assembly, homodimer. In terms of tissue distribution, expressed by the venom gland.

Its subcellular location is the secreted. Its function is as follows. Nerve growth factor is important for the development and maintenance of the sympathetic and sensory nervous systems. It stimulates division and differentiation of sympathetic and embryonic sensory neurons as well as basal forebrain cholinergic neurons in the brain. Its relevance in the snake venom is not clear. However, it has been shown to inhibit metalloproteinase-dependent proteolysis of platelet glycoprotein Ib alpha, suggesting a metalloproteinase inhibition to prevent metalloprotease autodigestion and/or protection against prey proteases. Binds a lipid between the two protein chains in the homodimer. The lipid-bound form promotes histamine relase from mouse mast cells, contrary to the lipid-free form. This Bungarus multicinctus (Many-banded krait) protein is Venom nerve growth factor.